A 347-amino-acid polypeptide reads, in one-letter code: Isopentenyl-diphosphate delta-isomerase (347 aa).

Residues 1-31 (MDESNSQFEKRKRDHIRIALDPRSQTDGQNG) are disordered. The segment covering 8-20 (FEKRKRDHIRIAL) has biased composition (basic and acidic residues). 11–12 (RK) is a binding site for substrate. Residues Ser-72, 73 to 75 (SMT), Ser-103, and Asn-132 contribute to the FMN site. 103–105 (SQR) provides a ligand contact to substrate. Residue Gln-166 participates in substrate binding. Glu-167 contacts Mg(2+). FMN contacts are provided by residues Lys-198, Ser-223, Thr-228, 279-281 (GVR), and 300-301 (AK).

It belongs to the IPP isomerase type 2 family. Homooctamer. Dimer of tetramers. FMN serves as cofactor. The cofactor is NADPH. It depends on Mg(2+) as a cofactor.

It localises to the cytoplasm. The catalysed reaction is isopentenyl diphosphate = dimethylallyl diphosphate. Functionally, involved in the biosynthesis of isoprenoids. Catalyzes the 1,3-allylic rearrangement of the homoallylic substrate isopentenyl (IPP) to its allylic isomer, dimethylallyl diphosphate (DMAPP). In Bdellovibrio bacteriovorus (strain ATCC 15356 / DSM 50701 / NCIMB 9529 / HD100), this protein is Isopentenyl-diphosphate delta-isomerase.